We begin with the raw amino-acid sequence, 678 residues long: Glycine--tRNA ligase beta subunit (678 aa).

This sequence belongs to the class-II aminoacyl-tRNA synthetase family. In terms of assembly, tetramer of two alpha and two beta subunits.

It is found in the cytoplasm. The enzyme catalyses tRNA(Gly) + glycine + ATP = glycyl-tRNA(Gly) + AMP + diphosphate. This is Glycine--tRNA ligase beta subunit from Streptococcus pneumoniae (strain Taiwan19F-14).